Here is a 72-residue protein sequence, read N- to C-terminus: Large ribosomal subunit protein uL29 (72 aa).

Belongs to the universal ribosomal protein uL29 family.

The sequence is that of Large ribosomal subunit protein uL29 (rpmC) from Chlamydia pneumoniae (Chlamydophila pneumoniae).